Consider the following 230-residue polypeptide: Ribosome maturation factor RimM (230 aa).

The 82-residue stretch at A149–Y230 folds into the PRC barrel domain.

Belongs to the RimM family. Binds ribosomal protein uS19.

It localises to the cytoplasm. An accessory protein needed during the final step in the assembly of 30S ribosomal subunit, possibly for assembly of the head region. Essential for efficient processing of 16S rRNA. May be needed both before and after RbfA during the maturation of 16S rRNA. It has affinity for free ribosomal 30S subunits but not for 70S ribosomes. This is Ribosome maturation factor RimM from Burkholderia mallei (strain NCTC 10229).